A 365-amino-acid polypeptide reads, in one-letter code: 3-dehydroquinate synthase (365 aa).

Residues Asp-75 to Lys-80, Gly-109 to Asp-113, Thr-133 to Thr-134, Lys-146, and Lys-155 contribute to the NAD(+) site. Glu-188, His-253, and His-269 together coordinate Zn(2+).

This sequence belongs to the sugar phosphate cyclases superfamily. Dehydroquinate synthase family. It depends on Co(2+) as a cofactor. The cofactor is Zn(2+). NAD(+) serves as cofactor.

It is found in the cytoplasm. It catalyses the reaction 7-phospho-2-dehydro-3-deoxy-D-arabino-heptonate = 3-dehydroquinate + phosphate. It participates in metabolic intermediate biosynthesis; chorismate biosynthesis; chorismate from D-erythrose 4-phosphate and phosphoenolpyruvate: step 2/7. Catalyzes the conversion of 3-deoxy-D-arabino-heptulosonate 7-phosphate (DAHP) to dehydroquinate (DHQ). The sequence is that of 3-dehydroquinate synthase from Corynebacterium glutamicum (strain R).